Here is a 381-residue protein sequence, read N- to C-terminus: Putative glycosyltransferase EpsD (381 aa).

It belongs to the glycosyltransferase group 1 family. Glycosyltransferase 4 subfamily.

May be involved in the production of the exopolysaccharide (EPS) component of the extracellular matrix during biofilm formation. EPS is responsible for the adhesion of chains of cells into bundles. Required for biofilm maintenance. The sequence is that of Putative glycosyltransferase EpsD (epsD) from Bacillus subtilis (strain 168).